The primary structure comprises 661 residues: ATP-dependent RNA helicase vasa (661 aa).

Residues 1-10 (MSDDWDDEPI) show a composition bias toward acidic residues. A disordered region spans residues 1–186 (MSDDWDDEPI…RRRRNEDDIN (186 aa)). The residue at position 22 (serine 22) is a Phosphoserine. Threonine 27 carries the post-translational modification Phosphothreonine. Gly residues-rich tracts occupy residues 38–52 (DGVGGSGGEGGGYQG) and 60–83 (RIGGGRGGGAGGYRGGNRDGGGFH). The segment covering 85-95 (GRREGERDFRG) has biased composition (basic and acidic residues). 5 tandem repeats follow at residues 93 to 99 (FRGGEGG), 100 to 106 (FRGGQGG), 107 to 113 (SRGGQGG), 114 to 120 (SRGGQGG), and 121 to 127 (FRGGEGG). Residues 93-127 (FRGGEGGFRGGQGGSRGGQGGSRGGQGGFRGGEGG) form a 5 X 7 AA tandem repeats of [FS]-R-G-G-[EQ]-G-G region. Gly residues predominate over residues 96–129 (GEGGFRGGQGGSRGGQGGSRGGQGGFRGGEGGFR). The span at 131 to 172 (RLYENEDGDERRGRLDREERGGERRGRLDREERGGERGERGD) shows a compositional bias: basic and acidic residues. Residues 184-188 (DINNN) carry the B30.2/SPRY domain-binding motif motif. The required for posterior localization in oocyte stretch occupies residues 184–203 (DINNNNNIVEDVERKREFYI). The Q motif signature appears at 245–273 (QHFTSADLRDIIIDNVNKSGYKIPTPIQK). The Helicase ATP-binding domain maps to 276–453 (IPVISSGRDL…GEFLKNYVFV (178 aa)). 289 to 296 (AQTGSGKT) contributes to the ATP binding site. The DEAD box motif lies at 399 to 402 (DEAD). The 148-residue stretch at 477–624 (KRSKLIEILS…TVPDFLRTCG (148 aa)) folds into the Helicase C-terminal domain.

Belongs to the DEAD box helicase family. DDX4/VASA subfamily. Interacts with eIF5B and faf. Interacts with gus (via B30.2/SPRY domain) and Fsn (via B30.2/SPRY domain). Interacts with aub, me31B, eIF-4a and TER94. Interacts with piwi; this interaction is RNA independent. Interacts with Dcr-1 and Fmr1; these interactions occur in the polar granules. The cofactor is Mg(2+). Post-translationally, ubiquitinated during oogenesis. Deubiquitinated by faf, which protects this protein from proteasome-mediated degradation. Abundantly expressed in the female germline. Gus and faf are required for vas expression in the posterior pole of the oocyte.

It is found in the cytoplasm. It localises to the perinuclear region. The protein localises to the cytoplasmic ribonucleoprotein granule. It catalyses the reaction ATP + H2O = ADP + phosphate + H(+). Its function is as follows. Involved in translational control mechanisms operating in early stages of oogenesis. Required maternally in many stages of oogenesis, including cystocyte differentiation, oocyte differentiation, and specification of anterior-posterior polarity in the developing cysts. Essential for the formation and/or structural integrity of perinuclear nuage particles during germ cell formation. Required for gus, Fsn and aub accumulation at the posterior pole of the embryo. Required for the localization of vas to the perinuclear region of nurse cells. May have a role in production of piwi-interacting RNA (piRNA). This is ATP-dependent RNA helicase vasa from Drosophila melanogaster (Fruit fly).